The sequence spans 235 residues: Phosphoribosylaminoimidazole-succinocarboxamide synthase (235 aa).

Belongs to the SAICAR synthetase family.

The enzyme catalyses 5-amino-1-(5-phospho-D-ribosyl)imidazole-4-carboxylate + L-aspartate + ATP = (2S)-2-[5-amino-1-(5-phospho-beta-D-ribosyl)imidazole-4-carboxamido]succinate + ADP + phosphate + 2 H(+). The protein operates within purine metabolism; IMP biosynthesis via de novo pathway; 5-amino-1-(5-phospho-D-ribosyl)imidazole-4-carboxamide from 5-amino-1-(5-phospho-D-ribosyl)imidazole-4-carboxylate: step 1/2. The sequence is that of Phosphoribosylaminoimidazole-succinocarboxamide synthase from Nautilia profundicola (strain ATCC BAA-1463 / DSM 18972 / AmH).